The chain runs to 401 residues: Argininosuccinate synthase (401 aa).

8–16 (AYSGGLDTT) provides a ligand contact to ATP. Tyr-87 serves as a coordination point for L-citrulline. Gly-117 serves as a coordination point for ATP. Thr-119, Asn-123, and Asp-124 together coordinate L-aspartate. Asn-123 contacts L-citrulline. L-citrulline contacts are provided by Arg-127, Ser-175, Glu-259, and Tyr-271.

It belongs to the argininosuccinate synthase family. Type 1 subfamily. As to quaternary structure, homotetramer.

The protein localises to the cytoplasm. The enzyme catalyses L-citrulline + L-aspartate + ATP = 2-(N(omega)-L-arginino)succinate + AMP + diphosphate + H(+). Its pathway is amino-acid biosynthesis; L-arginine biosynthesis; L-arginine from L-ornithine and carbamoyl phosphate: step 2/3. The polypeptide is Argininosuccinate synthase (Corynebacterium glutamicum (strain ATCC 13032 / DSM 20300 / JCM 1318 / BCRC 11384 / CCUG 27702 / LMG 3730 / NBRC 12168 / NCIMB 10025 / NRRL B-2784 / 534)).